The primary structure comprises 799 residues: High affinity nerve growth factor receptor (799 aa).

The signal sequence occupies residues 1–32 (MLRGQRHGQLGWHRPAAGLGGLVTSLMLACAC). At 33–418 (AASCRETCCP…DPVEKKDETP (386 aa)) the chain is on the extracellular side. 2 disulfide bridges follow: cysteine 36/cysteine 41 and cysteine 40/cysteine 50. Asparagine 67 carries N-linked (GlcNAc...) asparagine glycosylation. LRR repeat units lie at residues 90–113 (LGEL…AFHF) and 116–137 (RLSH…TVQG). Asparagine 121, asparagine 190, asparagine 204, asparagine 255, asparagine 264, asparagine 320, asparagine 325, asparagine 341, asparagine 361, and asparagine 404 each carry an N-linked (GlcNAc...) asparagine glycan. The LRRCT domain maps to 148–219 (NPLHCSCALL…GDDVFLQCQV (72 aa)). Residues cysteine 154 and cysteine 193 are joined by a disulfide bond. 2 Ig-like C2-type domains span residues 196–285 (PSVK…VSVS) and 295–368 (AVEQ…LAAN). 2 disulfides stabilise this stretch: cysteine 217–cysteine 267 and cysteine 302–cysteine 348. Residues 419–442 (FGVSVAVGLAVSAALFLSALLLVL) form a helical membrane-spanning segment. Residues 443 to 799 (NKCGQRSKFG…APPSYLDVLG (357 aa)) are Cytoplasmic-facing. Residues 472–493 (MTLGGSSLSPTEGKGSGLQGHI) form an interaction with SQSTM1 region. Tyrosine 499 is subject to Phosphotyrosine; by autocatalysis. The region spanning 513–784 (IILKWELGEG…LSMKDVHARL (272 aa)) is the Protein kinase domain. Residues 519–527 (LGEGAFGKV) and lysine 547 each bind ATP. The active-site Proton acceptor is aspartate 653. Residues tyrosine 679, tyrosine 683, tyrosine 684, and tyrosine 794 each carry the phosphotyrosine; by autocatalysis modification.

The protein belongs to the protein kinase superfamily. Tyr protein kinase family. Insulin receptor subfamily. In terms of assembly, exists in a dynamic equilibrium between monomeric (low affinity) and dimeric (high affinity) structures. Homodimerization is induced by binding of a NGF dimer. Found in a complex, at least composed of KIDINS220, MAGI2, NTRK1 and RAPGEF2; the complex is mainly formed at late endosomes in a nerve growth factor (NGF)-dependent manner. Interacts with RAPGEF2; the interaction is strengthened after NGF stimulation. Interacts with SQSTM1; bridges NTRK1 to NGFR. Forms a ternary complex with NGFR and KIDINS220; this complex is affected by the expression levels of KIDINS220 and an increase in KIDINS220 expression leads to a decreased association of NGFR and NTRK1. Interacts (phosphorylated upon activation by NGF) with SHC1; mediates SHC1 phosphorylation and activation. Interacts (phosphorylated upon activation by NGF) with PLCG1; mediates PLCG1 phosphorylation and activation. Interacts (phosphorylated) with SH2B1 and SH2B2. Interacts with GRB2. Interacts with PIK3R1. Interacts with FRS2. Interacts with SORT1; may regulate NTRK1 anterograde axonal transport. Interacts with SH2D1A; regulates NTRK1. Interacts with NRADD. Interacts with RAB7A. Interacts with PTPRS. Interacts with USP36; USP36 does not deubiquitinate NTRK1. Interacts with GGA3. Interacts with TSPAN1; this interaction promotes NTRK1 stability. Post-translationally, ligand-mediated autophosphorylation. Interaction with SQSTM1 is phosphotyrosine-dependent. Autophosphorylation at Tyr-499 mediates interaction and phosphorylation of SHC1. In terms of processing, N-glycosylated. Ubiquitinated. Undergoes polyubiquitination upon activation; regulated by NGFR. Ubiquitination by NEDD4L leads to degradation. Ubiquitination regulates the internalization of the receptor. Isoform Trka-II is primarily expressed in neuronal cells; isoform Trka-I is found in non-neuronal tissues.

It is found in the cell membrane. The protein localises to the early endosome membrane. It localises to the late endosome membrane. The protein resides in the recycling endosome membrane. It carries out the reaction L-tyrosyl-[protein] + ATP = O-phospho-L-tyrosyl-[protein] + ADP + H(+). Its activity is regulated as follows. The pro-survival signaling effect of NTRK1 in neurons requires its endocytosis into signaling early endosomes and its retrograde axonal transport. This is regulated by different proteins including CFL1, RAC1 and SORT1. NTF3 is unable to induce this signaling probably due to the lability of the NTF3-NTRK1 complex in endosomes. SH2D1A inhibits the autophosphorylation of the receptor, and alters the recruitment and activation of downstream effectors and signaling cascades. Regulated by NGFR. In terms of biological role, receptor tyrosine kinase involved in the development and the maturation of the central and peripheral nervous systems through regulation of proliferation, differentiation and survival of sympathetic and nervous neurons. High affinity receptor for NGF which is its primary ligand. Can also bind and be activated by NTF3/neurotrophin-3. However, NTF3 only supports axonal extension through NTRK1 but has no effect on neuron survival. Upon dimeric NGF ligand-binding, undergoes homodimerization, autophosphorylation and activation. Recruits, phosphorylates and/or activates several downstream effectors including SHC1, FRS2, SH2B1, SH2B2 and PLCG1 that regulate distinct overlapping signaling cascades driving cell survival and differentiation. Through SHC1 and FRS2 activates a GRB2-Ras-MAPK cascade that regulates cell differentiation and survival. Through PLCG1 controls NF-Kappa-B activation and the transcription of genes involved in cell survival. Through SHC1 and SH2B1 controls a Ras-PI3 kinase-AKT1 signaling cascade that is also regulating survival. In absence of ligand and activation, may promote cell death, making the survival of neurons dependent on trophic factors. The protein is High affinity nerve growth factor receptor (Ntrk1) of Rattus norvegicus (Rat).